A 442-amino-acid polypeptide reads, in one-letter code: UDP-glycosyltransferase 78D4 (442 aa).

UDP-alpha-D-glucose-binding positions include 322 to 324, 339 to 347, and 361 to 364; these read APQ, HGGWNSVLE, and FGDH.

Belongs to the UDP-glycosyltransferase family.

This Arabidopsis thaliana (Mouse-ear cress) protein is UDP-glycosyltransferase 78D4 (UGT78D4).